The primary structure comprises 145 residues: uncharacterized protein (145 aa).

The region spanning 78 to 145 (KLQIVAKDRI…DVVEKISILW (68 aa)) is the ACT domain.

This is an uncharacterized protein from Methanocaldococcus jannaschii (strain ATCC 43067 / DSM 2661 / JAL-1 / JCM 10045 / NBRC 100440) (Methanococcus jannaschii).